A 724-amino-acid chain; its full sequence is Protein Aster-A (724 aa).

A compositionally biased stretch (low complexity) spans 1-18 (MFDTTPHSGRSTPSSSPS). The interval 1–66 (MFDTTPHSGR…TPSTQSLGSR (66 aa)) is disordered. Positions 57-66 (TPSTQSLGSR) are enriched in polar residues. Positions 91–158 (EDFRKLFSKL…KEVTCLKKEK (68 aa)) constitute a GRAM domain. The interval 256 to 336 (SSGAADRSQE…GPTTLGPLDL (81 aa)) is disordered. 3 positions are modified to phosphoserine: serine 263, serine 267, and serine 271. A compositionally biased stretch (polar residues) spans 300–312 (DSQPDASSSQTVT). The span at 326-336 (DGPTTLGPLDL) shows a compositional bias: low complexity. A VASt domain is found at 367-538 (SGRLLINSVF…ELAKAEKLSL (172 aa)). Serine 415 is modified (phosphoserine). The interval 560-579 (SWRAHGDGPQHPDPDPCARA) is disordered. The segment covering 563–575 (AHGDGPQHPDPDP) has biased composition (basic and acidic residues). A helical membrane pass occupies residues 610–630 (LISIVICVSLIILIALNVLLF).

As to expression, expressed in liver.

The protein resides in the endoplasmic reticulum membrane. The protein localises to the cell membrane. It is found in the cytoplasmic vesicle. Its subcellular location is the autophagosome. Functionally, cholesterol transporter that mediates non-vesicular transport of cholesterol from the plasma membrane (PM) to the endoplasmic reticulum (ER). Contains unique domains for binding cholesterol and the PM, thereby serving as a molecular bridge for the transfer of cholesterol from the PM to the ER. Plays a crucial role in cholesterol homeostasis and has the unique ability to localize to the PM based on the level of membrane cholesterol. In lipid-poor conditions localizes to the ER membrane and in response to excess cholesterol in the PM is recruited to the endoplasmic reticulum-plasma membrane contact sites (EPCS) which is mediated by the GRAM domain. At the EPCS, the sterol-binding VASt/ASTER domain binds to the cholesterol in the PM and facilitates its transfer from the PM to ER. May play a role in tumor progression. Plays a role in autophagy regulation and is required for biogenesis of the autophagosome. This function in autophagy requires its cholesterol-transfer activity. In Homo sapiens (Human), this protein is Protein Aster-A.